The following is a 295-amino-acid chain: Acetylglutamate kinase (295 aa).

Substrate is bound by residues 64–65 (GG), Arg86, and Asn179.

Belongs to the acetylglutamate kinase family. ArgB subfamily.

It localises to the cytoplasm. It catalyses the reaction N-acetyl-L-glutamate + ATP = N-acetyl-L-glutamyl 5-phosphate + ADP. It participates in amino-acid biosynthesis; L-arginine biosynthesis; N(2)-acetyl-L-ornithine from L-glutamate: step 2/4. Catalyzes the ATP-dependent phosphorylation of N-acetyl-L-glutamate. This is Acetylglutamate kinase from Thermosynechococcus vestitus (strain NIES-2133 / IAM M-273 / BP-1).